Here is a 237-residue protein sequence, read N- to C-terminus: Class B acid phosphatase (237 aa).

Residues methionine 1–alanine 23 form the signal peptide. Aspartate 69 serves as the catalytic Nucleophile. The Mg(2+) site is built by aspartate 69 and aspartate 71. The Proton donor role is filled by aspartate 71. Substrate contacts are provided by residues threonine 137–glycine 138 and lysine 177. Aspartate 192 is a Mg(2+) binding site.

This sequence belongs to the class B bacterial acid phosphatase family. In terms of assembly, homotetramer. Requires Mg(2+) as cofactor.

Its subcellular location is the periplasm. It catalyses the reaction a phosphate monoester + H2O = an alcohol + phosphate. Its function is as follows. Dephosphorylates several organic phosphate monoesters. Also has a phosphotransferase activity catalyzing the transfer of low-energy phosphate groups from organic phosphate monoesters to free hydroxyl groups of various organic compounds. This is Class B acid phosphatase from Xenorhabdus bovienii (strain SS-2004) (Xenorhabdus nematophila subsp. bovienii).